The chain runs to 98 residues: Cell division protein FtsB (98 aa).

The Cytoplasmic segment spans residues 1 to 3 (MKR). A helical transmembrane segment spans residues 4–21 (LLFVLIALLAMLQYRLWL). Residues 22 to 98 (GDKSLADSFH…GGERGGVPEN (77 aa)) lie on the Periplasmic side of the membrane. Positions 31 to 74 (HLQEQIKLQQQSNAQLVARNQVLREEISDLRSGTEALEERARNE) form a coiled coil.

Belongs to the FtsB family. In terms of assembly, part of a complex composed of FtsB, FtsL and FtsQ.

The protein resides in the cell inner membrane. Essential cell division protein. May link together the upstream cell division proteins, which are predominantly cytoplasmic, with the downstream cell division proteins, which are predominantly periplasmic. This is Cell division protein FtsB from Shewanella pealeana (strain ATCC 700345 / ANG-SQ1).